The sequence spans 757 residues: Exo-alpha-(1-&gt;6)-L-arabinopyranosidase (757 aa).

Residue Asp-232 is part of the active site.

Belongs to the glycosyl hydrolase 3 family. In terms of assembly, homotetramer.

With respect to regulation, completely inhibited by Cu(2+) and Fe(2+). Catalyzes the hydrolysis of a non-reducing terminal alpha-L-arabinopyranosidic linkage in ginsenoside Rb2 (alpha-L-arabinopyranosyl-(1-&gt;6)-alpha-D-glucopyranosyl) to release alpha-D-glucopyranosyl (Rd). It is not able to hydrolyze alpha-L-arabinofuranosyl-(1-&gt;6)-alpha-D-glucopyranosyl (Rc). This is Exo-alpha-(1-&gt;6)-L-arabinopyranosidase from Bifidobacterium breve (strain ACS-071-V-Sch8b).